The sequence spans 192 residues: Epoxyqueuosine reductase QueH (192 aa).

4 residues coordinate [4Fe-4S] cluster: C9, C10, C87, and C90. C169 and C171 are disulfide-bonded.

This sequence belongs to the QueH family.

The enzyme catalyses epoxyqueuosine(34) in tRNA + AH2 = queuosine(34) in tRNA + A + H2O. Its pathway is tRNA modification; tRNA-queuosine biosynthesis. In terms of biological role, catalyzes the conversion of epoxyqueuosine (oQ) to queuosine (Q), which is a hypermodified base found in the wobble positions of tRNA(Asp), tRNA(Asn), tRNA(His) and tRNA(Tyr). This Thermotoga maritima (strain ATCC 43589 / DSM 3109 / JCM 10099 / NBRC 100826 / MSB8) protein is Epoxyqueuosine reductase QueH.